Here is a 293-residue protein sequence, read N- to C-terminus: Nucleotide-binding protein CKR_3143 (293 aa).

8-15 (GLSGAGKT) is an ATP binding site. 59-62 (DIRG) contributes to the GTP binding site.

Belongs to the RapZ-like family.

Displays ATPase and GTPase activities. The sequence is that of Nucleotide-binding protein CKR_3143 from Clostridium kluyveri (strain NBRC 12016).